Reading from the N-terminus, the 180-residue chain is Large ribosomal subunit protein eL20 (180 aa).

Belongs to the eukaryotic ribosomal protein eL20 family.

This Caenorhabditis elegans protein is Large ribosomal subunit protein eL20.